Consider the following 517-residue polypeptide: Tyrosine-protein kinase Fgr (517 aa).

The N-myristoyl glycine moiety is linked to residue glycine 2. Residues cysteine 3 and cysteine 6 are each lipidated (S-palmitoyl cysteine). Serine 13 bears the Phosphoserine mark. Tyrosine 32 bears the Phosphotyrosine mark. A Phosphoserine modification is found at serine 50. An SH3 domain is found at 65-126; the sequence is TGVTIFVALY…PSNYVAPVDS (62 aa). The interval 102-103 is interaction with CLNK; it reads WW. One can recognise an SH2 domain in the interval 132–229; it reads WYFGKISRKD…GLCYLLTAPC (98 aa). Phosphotyrosine is present on tyrosine 196. Serine 206 carries the post-translational modification Phosphoserine. Positions 251–504 constitute a Protein kinase domain; it reads IALERRLGTG…YLQSFLEDYF (254 aa). ATP-binding positions include 257–265 and lysine 279; that span reads LGTGCFGDV. Residue aspartate 370 is the Proton acceptor of the active site. Tyrosine 400 bears the Phosphotyrosine mark. A Phosphotyrosine; by SRC modification is found at tyrosine 511.

Belongs to the protein kinase superfamily. Tyr protein kinase family. SRC subfamily. As to quaternary structure, interacts with ITGB1, ITGB2, MS4A2/FCER1B, FCER1G and FCGR2. Interacts (via SH2 domain) with SYK (tyrosine phosphorylated). Interacts (via SH2 domain) with FLT3 (tyrosine phosphorylated). Interacts with PTK2/FAK1. Interacts (via SH2 domain) with HCLS1 (tyrosine phosphorylated by SYK). Interacts with SIRPA and PTPNS1. Interacts (not phosphorylated on tyrosine residues) with CBL; FGR tyrosine phosphorylation promotes dissociation. Interacts with CLNK. Post-translationally, ubiquitinated. Becomes ubiquitinated in response to ITGB2 signaling; this does not lead to degradation. In terms of processing, phosphorylated. Autophosphorylated on tyrosine residues. Becomes phosphorylated in response to FCGR2 engagement, cell adhesion and signaling by ITGB2. Prior phosphorylation at Tyr-511 by SRC inhibits ulterior autophosphorylation at Tyr-400. Expressed in natural killer cells (at protein level).

It localises to the cell membrane. The protein localises to the cell projection. It is found in the ruffle membrane. Its subcellular location is the cytoplasm. The protein resides in the cytosol. It localises to the cytoskeleton. The protein localises to the mitochondrion inner membrane. It is found in the mitochondrion intermembrane space. It catalyses the reaction L-tyrosyl-[protein] + ATP = O-phospho-L-tyrosyl-[protein] + ADP + H(+). With respect to regulation, activated by autophosphorylation. Prior phosphorylation at Tyr-511 by SRC inhibits ulterior autophosphorylation at Tyr-400. Activated by phorbol myristate acetate, phosphatidic acid and poly-Lys. Binding (via SH2 domain) of HCLS1 that is already phosphorylated by SYK strongly increases kinase activity. Functionally, non-receptor tyrosine-protein kinase that transmits signals from cell surface receptors devoid of kinase activity and contributes to the regulation of immune responses, including neutrophil, monocyte, macrophage and mast cell functions, cytoskeleton remodeling in response to extracellular stimuli, phagocytosis, cell adhesion and migration. Promotes mast cell degranulation, release of inflammatory cytokines and IgE-mediated anaphylaxis. Acts downstream of receptors that bind the Fc region of immunoglobulins, such as MS4A2/FCER1B, FCER1G and FCGR2. Acts downstream of ITGB1 and ITGB2, and regulates actin cytoskeleton reorganization, cell spreading and adhesion. Depending on the context, activates or inhibits cellular responses. Functions as a negative regulator of ITGB2 signaling, phagocytosis and SYK activity in monocytes. Required for normal ITGB1 and ITGB2 signaling, normal cell spreading and adhesion in neutrophils and macrophages. Functions as a positive regulator of cell migration and regulates cytoskeleton reorganization via RAC1 activation. Phosphorylates SYK (in vitro) and promotes SYK-dependent activation of AKT1 and MAP kinase signaling. Phosphorylates PLD2 in antigen-stimulated mast cells, leading to PLD2 activation and the production of the signaling molecules lysophosphatidic acid and diacylglycerol. Promotes activation of PIK3R1. Phosphorylates FASLG, and thereby regulates its ubiquitination and subsequent internalization. Phosphorylates ABL1. Promotes phosphorylation of CBL, CTTN, PIK3R1, PTK2/FAK1, PTK2B/PYK2 and VAV2. Phosphorylates HCLS1 that has already been phosphorylated by SYK, but not unphosphorylated HCLS1. Together with CLNK, it acts as a negative regulator of natural killer cell-activating receptors and inhibits interferon-gamma production. The sequence is that of Tyrosine-protein kinase Fgr (Fgr) from Mus musculus (Mouse).